The chain runs to 370 residues: Ganglioside-induced differentiation-associated protein 1-like 1 (370 aa).

Residues Glu45–His129 enclose the GST N-terminal domain. The GST C-terminal domain occupies Pro177 to Phe344.

It belongs to the GST superfamily.

The polypeptide is Ganglioside-induced differentiation-associated protein 1-like 1 (Gdap1l1) (Mus musculus (Mouse)).